Reading from the N-terminus, the 292-residue chain is Ornithine decarboxylase antizyme (292 aa).

The protein belongs to the ODC antizyme family. In terms of assembly, interacts with ODC/SPE1 and thereby sterically blocks ODC homodimerization.

Its function is as follows. Ornithine decarboxylase (ODC) antizyme protein that negatively regulates ODC activity and intracellular polyamine biosynthesis in response to increased intracellular polyamine levels. Binds to ODC/SPE1 monomers, inhibiting the assembly of the functional ODC homodimer, and targets the monomers for ubiquitin-independent proteolytic destruction by the 26S proteasome. The chain is Ornithine decarboxylase antizyme (OAZ1) from Saccharomyces cerevisiae (strain ATCC 204508 / S288c) (Baker's yeast).